The following is a 344-amino-acid chain: Phenylalanine--tRNA ligase alpha subunit (344 aa).

Position 261 (glutamate 261) interacts with Mg(2+).

The protein belongs to the class-II aminoacyl-tRNA synthetase family. Phe-tRNA synthetase alpha subunit type 1 subfamily. As to quaternary structure, tetramer of two alpha and two beta subunits. Mg(2+) is required as a cofactor.

The protein resides in the cytoplasm. The catalysed reaction is tRNA(Phe) + L-phenylalanine + ATP = L-phenylalanyl-tRNA(Phe) + AMP + diphosphate + H(+). The polypeptide is Phenylalanine--tRNA ligase alpha subunit (Ehrlichia ruminantium (strain Gardel)).